Reading from the N-terminus, the 434-residue chain is uncharacterized protein (434 aa).

5 helical membrane-spanning segments follow: residues 27-47 (IFLL…QSVI), 64-84 (FYLS…FVNW), 244-264 (IILA…ATVL), 289-309 (VPVN…PSLL), and 387-407 (LILT…GAVF).

Belongs to the CbiQ family.

Its subcellular location is the cell membrane. This is an uncharacterized protein from Mycoplasma pneumoniae (strain ATCC 29342 / M129 / Subtype 1) (Mycoplasmoides pneumoniae).